The chain runs to 610 residues: WD repeat-containing protein 46 (610 aa).

Residues 1–103 form a disordered region; it reads METAPKPGKD…TQDPFPGPAP (103 aa). The segment covering 7-19 has biased composition (basic and acidic residues); that stretch reads PGKDVPPKKDKLQ. Position 41 is a phosphoserine (Ser41). Residues 65 to 77 show a composition bias toward basic residues; it reads KKSRISKKPQVPK. 6 WD repeats span residues 193–234, 235–272, 274–312, 315–354, 357–396, and 399–436; these read LRQF…CEIN, VMEA…LHCI, RCDR…IVAA, ARAG…PLAK, CHRG…QPLS, and TLPH…SPPS. Residues 538-610 are disordered; the sequence is ERLGYDPQAK…RPSALDRFVR (73 aa). Over residues 572-582 the composition is skewed to basic and acidic residues; that stretch reads VMDEEHRDKVR.

Part of the small subunit (SSU) processome, composed of more than 70 proteins and the RNA chaperone small nucleolar RNA (snoRNA) U3. Interacts with DDX21, NCL, NOP2 and EBNA1BP2.

Its subcellular location is the nucleus. It localises to the nucleolus. Its function is as follows. Scaffold component of the nucleolar structure. Required for localization of DDX21 and NCL to the granular compartment of the nucleolus. Part of the small subunit (SSU) processome, first precursor of the small eukaryotic ribosomal subunit. During the assembly of the SSU processome in the nucleolus, many ribosome biogenesis factors, an RNA chaperone and ribosomal proteins associate with the nascent pre-rRNA and work in concert to generate RNA folding, modifications, rearrangements and cleavage as well as targeted degradation of pre-ribosomal RNA by the RNA exosome. This is WD repeat-containing protein 46 (WDR46) from Homo sapiens (Human).